The chain runs to 320 residues: MNDTYQFDAAGALLSTQLPFPRRQGKVRDVYDLGDRLLIVSSDRISAFDYILPTGIPDKGRLLTAMSRFWFEQMDAGRIGQNVGSAGGDGSSNPRSISHHLISTDVPEDVAAVVDPKPLEGRVMVTRKASVVPFECVVRGYLEGSGWKEYQATGEVCGVSLPAGLKQCDQLSEAIFTPATKAEEGHDENVSYEVMSQSLGEEQSSQLRRMSLAIYQDASKIAAERGLLIADTKFEFGVVDGELMLIDEVLTPDSSRFWAADEYEPGHSQRSFDKQFVREYLQESDWDRNSPPPPLPESIAHQTADRYREGYERLVGKAFA.

Residues 283-303 (ESDWDRNSPPPPLPESIAHQT) form a disordered region.

The protein belongs to the SAICAR synthetase family.

The enzyme catalyses 5-amino-1-(5-phospho-D-ribosyl)imidazole-4-carboxylate + L-aspartate + ATP = (2S)-2-[5-amino-1-(5-phospho-beta-D-ribosyl)imidazole-4-carboxamido]succinate + ADP + phosphate + 2 H(+). It functions in the pathway purine metabolism; IMP biosynthesis via de novo pathway; 5-amino-1-(5-phospho-D-ribosyl)imidazole-4-carboxamide from 5-amino-1-(5-phospho-D-ribosyl)imidazole-4-carboxylate: step 1/2. The polypeptide is Phosphoribosylaminoimidazole-succinocarboxamide synthase (Rhodopirellula baltica (strain DSM 10527 / NCIMB 13988 / SH1)).